An 840-amino-acid chain; its full sequence is E3 ubiquitin-protein ligase RNF19A (840 aa).

Residues 40 to 61 are disordered; the sequence is SDRDLQSSTSSVSLPSVKKAPK. The span at 45–56 shows a compositional bias: low complexity; sequence QSSTSSVSLPSV. Positions 128 to 351 are TRIAD supradomain; the sequence is DFIECPLCLL…LSPSGCTFWG (224 aa). Residues cysteine 132, cysteine 135, cysteine 150, histidine 152, cysteine 155, cysteine 158, cysteine 176, cysteine 179, cysteine 219, cysteine 224, cysteine 241, cysteine 246, cysteine 251, cysteine 254, histidine 259, cysteine 264, cysteine 301, and cysteine 304 each contribute to the Zn(2+) site. The RING-type 1 zinc-finger motif lies at 132-179; the sequence is CPLCLLRHSKDRFPDIMTCHHRSCVDCLRQYLRIEISESRVNISCPEC. The IBR-type zinc finger occupies 199–264; the sequence is EKYEEFMLRR…KQIWHPNQTC (66 aa). Residues 301–332 form an RING-type 2; atypical zinc finger; the sequence is CPRCAAYIIKMNDGSCNHMTCAVCGCEFCWLC. Residue cysteine 316 is part of the active site. Positions 321, 324, 329, 332, 340, and 347 each coordinate Zn(2+). Transmembrane regions (helical) follow at residues 368 to 388 and 424 to 444; these read LVGA…AMII and VIVS…IMLA. 3 disordered regions span residues 625–685, 700–721, and 786–808; these read FKFR…GNMK, QQST…PSVA, and CSDV…GGKP. Phosphoserine is present on serine 631. The interaction with CASR stretch occupies residues 660-840; it reads ATKWSKEATG…DLKVAVQTEI (181 aa). Positions 671–683 are enriched in basic residues; sequence KKSKSGKLRKKGN. The span at 700–717 shows a compositional bias: polar residues; the sequence is QQSTNSSEFEAPSLSDSM.

Belongs to the RBR family. RNF19 subfamily. As to quaternary structure, interacts with UBE2L3 and UBE2L6. Also interacts with transcription factor Sp1. Interacts with SNCAIP and CASR. Interacts with VCP.

The protein localises to the membrane. Its subcellular location is the cytoplasm. The protein resides in the cytoskeleton. It is found in the microtubule organizing center. It localises to the centrosome. It catalyses the reaction [E2 ubiquitin-conjugating enzyme]-S-ubiquitinyl-L-cysteine + [acceptor protein]-L-lysine = [E2 ubiquitin-conjugating enzyme]-L-cysteine + [acceptor protein]-N(6)-ubiquitinyl-L-lysine.. It participates in protein modification; protein ubiquitination. Its function is as follows. E3 ubiquitin-protein ligase which accepts ubiquitin from E2 ubiquitin-conjugating enzymes UBE2L3 and UBE2L6 in the form of a thioester and then directly transfers the ubiquitin to targeted substrates, such as SNCAIP or CASR. The protein is E3 ubiquitin-protein ligase RNF19A (Rnf19a) of Mus musculus (Mouse).